Consider the following 272-residue polypeptide: Elongation factor Ts (272 aa).

The segment at 86–89 is involved in Mg(2+) ion dislocation from EF-Tu; the sequence is TDFV.

It belongs to the EF-Ts family.

Its subcellular location is the cytoplasm. In terms of biological role, associates with the EF-Tu.GDP complex and induces the exchange of GDP to GTP. It remains bound to the aminoacyl-tRNA.EF-Tu.GTP complex up to the GTP hydrolysis stage on the ribosome. The protein is Elongation factor Ts of Blochmanniella pennsylvanica (strain BPEN).